A 416-amino-acid chain; its full sequence is uncharacterized protein (416 aa).

Residues 341 to 360 are disordered; it reads EDREKGSQHTNNTHHHKRNL.

This is an uncharacterized protein from Human cytomegalovirus (strain AD169) (HHV-5).